The following is a 1103-amino-acid chain: Coatomer subunit beta (1103 aa).

7 HEAT repeats span residues 51–89, 94–129, 130–166, 247–284, 322–359, 365–404, and 405–441; these read EAYT…CRPD, EEMI…RQFK, VLEP…NFGL, QQKA…APVS, RTME…KNSV, VLKR…RFPE, and AAAS…TCVH.

As to quaternary structure, oligomeric complex that consists of at least the alpha, beta, beta', gamma, delta, epsilon and zeta subunits.

The protein resides in the cytoplasm. Its subcellular location is the golgi apparatus membrane. It is found in the cytoplasmic vesicle. It localises to the COPI-coated vesicle membrane. In terms of biological role, the coatomer is a cytosolic protein complex that binds to dilysine motifs and reversibly associates with Golgi non-clathrin-coated vesicles, which further mediate biosynthetic protein transport from the ER, via the Golgi up to the trans Golgi network. Coatomer complex is required for budding from Golgi membranes, and is essential for the retrograde Golgi-to-ER transport of dilysine-tagged proteins. This is Coatomer subunit beta from Toxoplasma gondii.